Consider the following 117-residue polypeptide: Small ribosomal subunit protein bS16 (117 aa).

Basic residues predominate over residues 81–90; it reads LKKRPNRNNP. Residues 81-117 form a disordered region; that stretch reads LKKRPNRNNPHKGQPGKKAQERISAAKQVAEAESAPV.

This sequence belongs to the bacterial ribosomal protein bS16 family.

The chain is Small ribosomal subunit protein bS16 from Bartonella quintana (strain Toulouse) (Rochalimaea quintana).